A 323-amino-acid polypeptide reads, in one-letter code: Transaldolase (323 aa).

Lysine 131 (schiff-base intermediate with substrate) is an active-site residue.

Belongs to the transaldolase family. Type 1 subfamily. As to quaternary structure, homodimer.

It is found in the cytoplasm. It catalyses the reaction D-sedoheptulose 7-phosphate + D-glyceraldehyde 3-phosphate = D-erythrose 4-phosphate + beta-D-fructose 6-phosphate. The protein operates within carbohydrate degradation; pentose phosphate pathway; D-glyceraldehyde 3-phosphate and beta-D-fructose 6-phosphate from D-ribose 5-phosphate and D-xylulose 5-phosphate (non-oxidative stage): step 2/3. Transaldolase is important for the balance of metabolites in the pentose-phosphate pathway. The chain is Transaldolase from Blochmanniella floridana.